The sequence spans 149 residues: MRIIVDADACPGRNLIEKAAIENSVEVIMYCDINHELKSDYSEVRVVDSGFQSVDMKIINEAKENDIIVTQDYGVAAMVLGRKAFAISPKGYIYDDDNIDRLLFERHLSAKARRGGKKTFNPKKRTDEDNLRLYNNILKLINKAKEKSN.

It belongs to the UPF0178 family.

The chain is UPF0178 protein NT01CX_0440 from Clostridium novyi (strain NT).